A 320-amino-acid chain; its full sequence is Annexin A5 (320 aa).

Ala-2 bears the N-acetylalanine mark. Annexin repeat units follow at residues 15–86, 87–158, 170–242, and 246–317; these read FDER…ALMK, PSRL…VLLQ, AQVE…AVVK, and SIPA…LLCG. Lys-29 participates in a covalent cross-link: Glycyl lysine isopeptide (Lys-Gly) (interchain with G-Cter in SUMO1); alternate. Lys-29 participates in a covalent cross-link: Glycyl lysine isopeptide (Lys-Gly) (interchain with G-Cter in SUMO2); alternate. A Phosphoserine modification is found at Ser-37. Lys-70, Lys-76, Lys-79, Lys-97, and Lys-101 each carry N6-acetyllysine. An N6-succinyllysine modification is found at Lys-290. Residues 314 to 319 carry the [IL]-x-C-x-x-[DE] motif motif; sequence LLCGED.

Belongs to the annexin family. In terms of assembly, monomer. Binds ATRX and EIF5B. Interacts with hepatitis B virus (HBV). Post-translationally, S-nitrosylation is induced by interferon-gamma and oxidatively-modified low-densitity lipoprotein (LDL(ox)) possibly implicating the iNOS-S100A8/9 transnitrosylase complex.

Its function is as follows. This protein is an anticoagulant protein that acts as an indirect inhibitor of the thromboplastin-specific complex, which is involved in the blood coagulation cascade. The protein is Annexin A5 (ANXA5) of Homo sapiens (Human).